The sequence spans 83 residues: MTDVAATDIAAYSFEKAVAELESIVARLERGDVALDESISIYERGELLKKHCEALLSAAENRIEKIRLDRAGKPVGAEPLDKD.

Belongs to the XseB family. In terms of assembly, heterooligomer composed of large and small subunits.

It localises to the cytoplasm. It carries out the reaction Exonucleolytic cleavage in either 5'- to 3'- or 3'- to 5'-direction to yield nucleoside 5'-phosphates.. In terms of biological role, bidirectionally degrades single-stranded DNA into large acid-insoluble oligonucleotides, which are then degraded further into small acid-soluble oligonucleotides. The polypeptide is Exodeoxyribonuclease 7 small subunit (Allorhizobium ampelinum (strain ATCC BAA-846 / DSM 112012 / S4) (Agrobacterium vitis (strain S4))).